A 352-amino-acid chain; its full sequence is 3'(2'),5'-bisphosphate nucleotidase (352 aa).

The active-site Proton acceptor is the Asp-45. Positions 68, 133, 135, and 136 each coordinate Mg(2+). The active-site Proton acceptor is the Thr-138. 6 residues coordinate adenosine 3',5'-bisphosphate: Thr-138, His-240, Ser-264, Lys-267, Arg-281, and Asp-294. The AMP site is built by His-240, Ser-264, Lys-267, Arg-281, and Asp-294. Residue Asp-294 participates in Mg(2+) binding.

This sequence belongs to the inositol monophosphatase superfamily. Requires Mg(2+) as cofactor.

It carries out the reaction 3'-phosphoadenylyl sulfate + H2O = adenosine 5'-phosphosulfate + phosphate. The catalysed reaction is adenosine 3',5'-bisphosphate + H2O = AMP + phosphate. The enzyme catalyses adenosine 2',5'-bisphosphate + H2O = AMP + phosphate. Its function is as follows. Phosphatase that converts adenosine 3'-phosphate 5'-phosphosulfate (PAPS) to adenosine 5'-phosphosulfate (APS) and 3'(2')-phosphoadenosine 5'-phosphate (PAP) to AMP. May regulate the flux of sulfur in the sulfur-activation pathway by converting PAPS to APS. Involved in osmoadaptation. This is 3'(2'),5'-bisphosphate nucleotidase from Emericella nidulans (strain FGSC A4 / ATCC 38163 / CBS 112.46 / NRRL 194 / M139) (Aspergillus nidulans).